Here is a 402-residue protein sequence, read N- to C-terminus: Bacteriochlorophyllide c C-7(1)-hydroxylase (402 aa).

The region spanning 104 to 359 (VIGMNQDIIN…IKYQDRFDMP (256 aa)) is the Radical SAM core domain. [4Fe-4S] cluster is bound by residues C120, C129, and C132.

The protein belongs to the radical SAM superfamily. [4Fe-4S] cluster is required as a cofactor.

It catalyses the reaction a bacteriochlorophyllide c + 2 S-adenosyl-L-methionine + H2O = a bacteriochlorophyllide e + 2 5'-deoxyadenosine + 2 L-methionine + 2 H(+). The enzyme catalyses a bacteriochlorophyllide d + 2 S-adenosyl-L-methionine + H2O = a bacteriochlorophyllide f + 2 5'-deoxyadenosine + 2 L-methionine + 2 H(+). It functions in the pathway porphyrin-containing compound metabolism; bacteriochlorophyll biosynthesis. Its function is as follows. Involved in the biosynthesis of bacteriochlorophyll e (BChl e). Catalyzes two consecutive hydroxylation reactions of the C-7 methyl group of bacteriochlorophyllide c (BChlide c) to form a geminal diol intermediate that spontaneously dehydrates to produce the formyl group of bacteriochlorophyllide e (BChlide e). Also able to catalyze the same reaction for bacteriochlorophyllide d (BChlide d) to give rise to bacteriochlorophyllide f (BChlide f). This chain is Bacteriochlorophyllide c C-7(1)-hydroxylase, found in Chlorobaculum limnaeum.